The sequence spans 164 residues: HTH-type transcriptional regulator IscR (164 aa).

One can recognise an HTH rrf2-type domain in the interval 2–131; sequence RLTSKGRYAV…NNITLDELVN (130 aa). The segment at residues 28–51 is a DNA-binding region (H-T-H motif); it reads LADISERQGISLSYLEQLFSRLRK. [2Fe-2S] cluster contacts are provided by Cys-92, Cys-98, and Cys-104.

[2Fe-2S] cluster serves as cofactor.

Functionally, regulates the transcription of several operons and genes involved in the biogenesis of Fe-S clusters and Fe-S-containing proteins. This is HTH-type transcriptional regulator IscR from Pectobacterium atrosepticum (strain SCRI 1043 / ATCC BAA-672) (Erwinia carotovora subsp. atroseptica).